We begin with the raw amino-acid sequence, 356 residues long: Serine/arginine-rich splicing factor RS41 (356 aa).

2 RRM domains span residues 2 to 74 (KPVF…WTKN) and 96 to 167 (KTLF…YAVK). The tract at residues 73-92 (KNDRGGAGRSGGSRRSSSGL) is disordered. Residues 168–186 (DDDSRGNGYSPERRRDRSP) are compositionally biased toward basic and acidic residues. Positions 168–356 (DDDSRGNGYS…SPSRSPPAEE (189 aa)) are disordered. Phosphoserine is present on residues Ser-192, Ser-194, Ser-210, Ser-239, Ser-254, and Ser-274. Positions 238–253 (LSPDYKRDDRRRERVA) are enriched in basic and acidic residues. 3 tandem repeats follow at residues 267–278 (KGRGESRSPPPY), 279–290 (EKRRESRSPPPY), and 291–302 (EKRRESRSPPPY). Positions 267–307 (KGRGESRSPPPYEKRRESRSPPPYEKRRESRSPPPYEKRRE) are 4 X 12 AA tandem repeats of [KE]-[GK]-R -[GR]-E-S-R-S-P-P-P-Y. Residues 268 to 306 (GRGESRSPPPYEKRRESRSPPPYEKRRESRSPPPYEKRR) show a composition bias toward basic and acidic residues. A 4; truncated repeat occupies 303 to 307 (EKRRE). Ser-309, Ser-324, Ser-342, Ser-347, and Ser-351 each carry phosphoserine.

This sequence belongs to the splicing factor SR family. RS subfamily. As to quaternary structure, component of the spliceosome. Interacts with RCF3 and CPL1. Interacts with DRB1/HYL1 and SE. As to expression, leaves, stem, roots and flowers.

It localises to the nucleus. The protein localises to the nucleus speckle. Functionally, required for constitutive and alternative pre-mRNA splicing. Involved in primary miRNA processing and pri-miRNA biogenesis. Binds both intronless and intron-containing pri-miRNAs. This Arabidopsis thaliana (Mouse-ear cress) protein is Serine/arginine-rich splicing factor RS41 (RS41).